Consider the following 1207-residue polypeptide: AP-3 complex subunit delta-1 (1207 aa).

Position 2 is an N-acetylalanine (Ala2). HEAT repeat units follow at residues 34–71 (KYIS…LGYD), 142–179 (DLAR…KYPE), 180–216 (SLRP…RNPK), 218–254 (YLSL…LEPR), 257–296 (KKLI…GMPN), 298–336 (SASI…THPK), 337–373 (SVQA…KKNL), 375–409 (EIVK…QSNY), and 521–558 (VYVQ…ERLP). Disordered regions lie at residues 630–695 (PLSD…RYQD) and 731–970 (RRHR…EEPL). A phosphoserine mark is found at Ser632, Ser634, and Ser636. Basic and acidic residues predominate over residues 648–675 (EEQRHTKPRAPEADEQELARRREARRQE). Residues 659-679 (EADEQELARRREARRQEQANN) adopt a coiled-coil conformation. Ser688 carries the post-translational modification Phosphoserine. A coiled-coil region spans residues 725–752 (VKLEEERRHRQRLEKDKRKKKKRERERR). Basic and acidic residues predominate over residues 731 to 740 (RRHRQRLEKD). A compositionally biased stretch (basic residues) spans 741–759 (KRKKKKRERERRGTRRHSS). A phosphoserine mark is found at Ser758 and Ser759. Thr762 carries the phosphothreonine modification. 3 positions are modified to phosphoserine: Ser764, Ser788, and Ser829. Acidic residues predominate over residues 777 to 794 (VTEEMPENALPSDEDDKD). Residues 795 to 840 (PNDPYRALDIDLDKPLADSEKLPVQKHRNAETSKSPEKEDVPLVEK) are compositionally biased toward basic and acidic residues. Over residues 841-854 (KSKKPKKKEKKHKE) the composition is skewed to basic residues. A coiled-coil region spans residues 846-870 (KKKEKKHKEKEREKKKKEVEKGEDL). Basic and acidic residues-rich tracts occupy residues 855–869 (KERE…KGED) and 899–908 (EGQEEPRGEE). Residues 923-933 (PSKHKKKKHKK) show a composition bias toward basic residues. Residues 952–969 (ADEEAAEPVENGTLEEEP) are compositionally biased toward acidic residues.

This sequence belongs to the adaptor complexes large subunit family. As to quaternary structure, AP-3 associates with the BLOC-1 complex. Adaptor protein complex 3 (AP-3) is a heterotetramer composed of two large adaptins (delta-type subunit AP3D1 and beta-type subunit AP3B1 or AP3B2), a medium adaptin (mu-type subunit AP3M1 or AP3M2) and a small adaptin (sigma-type subunit APS1 or AP3S2). Interacts with SLC30A2. Interacts with CLN3 (via dileucine motif); this interaction facilitates lysosomal targeting.

It is found in the cytoplasm. The protein resides in the golgi apparatus membrane. In terms of biological role, part of the AP-3 complex, an adaptor-related complex which is not clathrin-associated. The complex is associated with the Golgi region as well as more peripheral structures. It facilitates the budding of vesicles from the Golgi membrane and may be directly involved in trafficking to lysosomes. Involved in process of CD8+ T-cell and NK cell degranulation. In concert with the BLOC-1 complex, AP-3 is required to target cargos into vesicles assembled at cell bodies for delivery into neurites and nerve terminals. This chain is AP-3 complex subunit delta-1 (AP3D1), found in Bos taurus (Bovine).